A 92-amino-acid polypeptide reads, in one-letter code: Small ribosomal subunit protein uS19 (92 aa).

This sequence belongs to the universal ribosomal protein uS19 family.

Functionally, protein S19 forms a complex with S13 that binds strongly to the 16S ribosomal RNA. The chain is Small ribosomal subunit protein uS19 from Xanthobacter autotrophicus (strain ATCC BAA-1158 / Py2).